We begin with the raw amino-acid sequence, 309 residues long: Mitochondrial import receptor subunit TOM34 (309 aa).

Residue S8 is modified to Phosphoserine. TPR repeat units lie at residues 9–42, 51–84, and 85–118; these read VEQLRAAGNQNFRNGQYGEASALYERALRLLQAR, SVLYSNRAACYLKDGNCTDCIKDCTSALALVPFS, and IKPLLRRASAYEALEKYALAYVDYKTVLQIDNSV. Residues 158-189 are disordered; that stretch reads WNSLPSDNHKETAKTKSKEATATKSRVPSAGD. S160 bears the Phosphoserine mark. Positions 164–178 are enriched in basic and acidic residues; sequence DNHKETAKTKSKEAT. The residue at position 186 (S186) is a Phosphoserine. TPR repeat units lie at residues 193–226, 227–260, and 261–294; these read AKALKEEGNDLVKKGNHKKAIEKYSESLLCSSLE, SATYSNRALCHLVLKQYKEAVKDCTEALKLDGKN, and VKAFYRRAQAYKALKDYKSSLSDISSLLQIEPRN. K197 participates in a covalent cross-link: Glycyl lysine isopeptide (Lys-Gly) (interchain with G-Cter in SUMO2).

This sequence belongs to the Tom34 family. Interacts with HSP90A, VCP, ATP6V1D, KIAA0665, AMPK, and DMAP1 through its TPR repeat. In terms of tissue distribution, isoform 1 is ubiquitously expressed while isoform 2 is expressed only in mature testicular germ cells. Isoform 1 is expressed in all testicular cells. Isoform 2 is highly expressed in early to late pachytene cells but expression is significantly decreased in round spermatid cells.

It localises to the cytoplasm. It is found in the mitochondrion outer membrane. In terms of biological role, plays a role in the import of cytosolically synthesized preproteins into mitochondria. Binds the mature portion of precursor proteins. Interacts with cellular components, and possesses weak ATPase activity. May be a chaperone-like protein that helps to keep newly synthesized precursors in an unfolded import compatible state. The chain is Mitochondrial import receptor subunit TOM34 (Tomm34) from Mus musculus (Mouse).